A 532-amino-acid chain; its full sequence is Probable inorganic phosphate transporter 1-9 (532 aa).

The Cytoplasmic portion of the chain corresponds to 1-22 (MPELSLLSALDAARIQWYHFKA). Residues 23 to 43 (IIVAGMGLFTDAYDLFCIAPI) traverse the membrane as a helical segment. Topologically, residues 44 to 62 (MKMISQIYYHKDSIGTALL) are extracellular. Residues 63 to 83 (STSYAIALLGTALGQLIFGYL) form a helical membrane-spanning segment. At 84–91 (GDRVGRRK) the chain is on the cytoplasmic side. The chain crosses the membrane as a helical span at residues 92–112 (VYGLSLLIMVFSSFGCGFSVC). Over 113–124 (TTRRSCVMVSLG) the chain is Extracellular. Residues 125–145 (FFRFVLGLGIGGDYPLSATIM) form a helical membrane-spanning segment. Topologically, residues 146–154 (SEFANKRTR) are cytoplasmic. A helical membrane pass occupies residues 155–175 (GAFIAAVFSMQGLGILMSSAV). At 176 to 207 (TMVVCLAFKNAGEGSSEKTNVAGLETLAPPES) the chain is on the extracellular side. Residues 208-228 (DIAWRLILMIGALPAALTFYW) traverse the membrane as a helical segment. The Cytoplasmic segment spans residues 229 to 292 (RMLMPETARY…KLFSRRFLSL (64 aa)). The chain crosses the membrane as a helical span at residues 293–313 (HGRDLFAASANWFLVDVVFYT). Topologically, residues 314–343 (SNLLLSQIFNFSNKPLNSTNVYDSAFEVAK) are extracellular. Residues 344-364 (LAAIVAACSTIPGYWFTVYFI) form a helical membrane-spanning segment. Topologically, residues 365–371 (DKIGRVK) are cytoplasmic. The chain crosses the membrane as a helical span at residues 372–392 (IQMMGFFLMAVVYLVAGIPYS). Over 393-406 (WYWSKHEKTNKGFM) the chain is Extracellular. A helical membrane pass occupies residues 407–427 (VLYGLIFFFSNFGPNTTTFII). At 428 to 441 (PAELFPARFRSTCH) the chain is on the cytoplasmic side. The helical transmembrane segment at 442 to 462 (GISGAAGKFGAIVGTVGFLWA) threads the bilayer. The Extracellular portion of the chain corresponds to 463–478 (TRHHEEDGFPDVKRVR). The helical transmembrane segment at 479-499 (IAFLILGGVCIAGMIVTYLFT) threads the bilayer. Residues 500-532 (RETMGRSLEENEDEIVSTSAGSSPANELLRRQY) are Cytoplasmic-facing. The interval 509–532 (ENEDEIVSTSAGSSPANELLRRQY) is disordered. A compositionally biased stretch (polar residues) spans 515 to 524 (VSTSAGSSPA).

Belongs to the major facilitator superfamily. Phosphate:H(+) symporter (TC 2.A.1.9) family.

It is found in the membrane. High-affinity transporter for external inorganic phosphate. This chain is Probable inorganic phosphate transporter 1-9 (PHT1-9), found in Arabidopsis thaliana (Mouse-ear cress).